The chain runs to 400 residues: Chorismate synthase (400 aa).

R40 and R46 together coordinate NADP(+). Residues 135–137, 257–258, G301, 316–320, and R342 contribute to the FMN site; these read RAS, QA, and KPIST.

It belongs to the chorismate synthase family. As to quaternary structure, homotetramer. The cofactor is FMNH2.

The catalysed reaction is 5-O-(1-carboxyvinyl)-3-phosphoshikimate = chorismate + phosphate. It functions in the pathway metabolic intermediate biosynthesis; chorismate biosynthesis; chorismate from D-erythrose 4-phosphate and phosphoenolpyruvate: step 7/7. Its function is as follows. Catalyzes the anti-1,4-elimination of the C-3 phosphate and the C-6 proR hydrogen from 5-enolpyruvylshikimate-3-phosphate (EPSP) to yield chorismate, which is the branch point compound that serves as the starting substrate for the three terminal pathways of aromatic amino acid biosynthesis. This reaction introduces a second double bond into the aromatic ring system. In Tropheryma whipplei (strain TW08/27) (Whipple's bacillus), this protein is Chorismate synthase.